The following is a 486-amino-acid chain: HTH-type transcriptional regulator PrpR (486 aa).

Residues 22 to 76 (LRRLRQERGLTQVALAKALDLSTSYVNQLENDQRPITVPVLLLLTERFDLSAQYF) enclose the HTH cro/C1-type domain. The segment at residues 33–52 (QVALAKALDLSTSYVNQLEN) is a DNA-binding region (H-T-H motif).

This sequence belongs to the short-chain fatty acyl-CoA assimilation regulator (ScfR) family.

Its pathway is organic acid metabolism; propanoate degradation. The protein operates within steroid metabolism; cholesterol metabolism. Functionally, plays a key role in regulating expression of enzymes involved in the catabolism of short chain fatty acids (SCFA) via both the glyoxylate (acetyl degradation route) and the methylcitrate cycle (propionate degradation route). Required for intracellular growth in macrophages and for the assimilation of cholesterol-derived propionate. PrpR acts as a transcriptional activator of prpDC and icl genes when propionate is the main carbon source, and as a ramB repressor. During growth on propionate, PrpR also acts as a transcriptional repressor of dnaA, which encodes the DnaA initiator protein responsible for initiating chromosomal replication. It is possibly involved in the regulation of genes responsible for controlling cholesterol utilization. The sequence is that of HTH-type transcriptional regulator PrpR from Mycobacterium tuberculosis (strain ATCC 25618 / H37Rv).